The sequence spans 1323 residues: DNA-directed RNA polymerase subunit beta' (1323 aa).

Residues C60, C62, C75, and C78 each coordinate Zn(2+). Mg(2+)-binding residues include D535, D537, and D539. Zn(2+)-binding residues include C894, C977, C984, and C987.

This sequence belongs to the RNA polymerase beta' chain family. In terms of assembly, the RNAP catalytic core consists of 2 alpha, 1 beta, 1 beta' and 1 omega subunit. When a sigma factor is associated with the core the holoenzyme is formed, which can initiate transcription. Mg(2+) is required as a cofactor. Requires Zn(2+) as cofactor.

The catalysed reaction is RNA(n) + a ribonucleoside 5'-triphosphate = RNA(n+1) + diphosphate. In terms of biological role, DNA-dependent RNA polymerase catalyzes the transcription of DNA into RNA using the four ribonucleoside triphosphates as substrates. The sequence is that of DNA-directed RNA polymerase subunit beta' from Corynebacterium jeikeium (strain K411).